Consider the following 72-residue polypeptide: Gas vesicle protein A (72 aa).

Belongs to the gas vesicle GvpA family. The gas vesicle shell is 2 nm thick and consists of a single layer of this protein. It forms helical ribs nearly perpendicular to the long axis of the vesicle.

It is found in the gas vesicle shell. Its function is as follows. Gas vesicles are hollow, gas filled proteinaceous nanostructures found in some microorganisms. During planktonic growth they allow positioning of the organism at a favorable depth for light or nutrient acquisition. GvpA forms the protein shell. In Haloquadratum walsbyi (strain DSM 16790 / HBSQ001), this protein is Gas vesicle protein A.